We begin with the raw amino-acid sequence, 255 residues long: Putative expansin-A27 (255 aa).

The N-terminal stretch at 1 to 24 is a signal peptide; the sequence is MGAMAENLLVLCTILAARMALAAA. The Expansin-like EG45 domain occupies 45-160; that stretch reads GGACGYGNLY…RRVRCWRRGG (116 aa). The 80-residue stretch at 170 to 249 folds into the Expansin-like CBD domain; that stretch reads HFELVLVANV…GWKFGQTFST (80 aa).

The protein belongs to the expansin family. Expansin A subfamily.

Its subcellular location is the secreted. The protein localises to the cell wall. It localises to the membrane. Its function is as follows. May cause loosening and extension of plant cell walls by disrupting non-covalent bonding between cellulose microfibrils and matrix glucans. No enzymatic activity has been found. May be required for rapid internodal elongation in deepwater rice during submergence. The sequence is that of Putative expansin-A27 (EXPA27) from Oryza sativa subsp. japonica (Rice).